Here is a 442-residue protein sequence, read N- to C-terminus: Vacuolar zinc transporter ZRC1 (442 aa).

The Cytoplasmic segment spans residues methionine 1–arginine 8. Residues isoleucine 9–methionine 29 form a helical membrane-spanning segment. Topologically, residues serine 30–serine 32 are vacuolar. Residues leucine 33–leucine 53 traverse the membrane as a helical segment. Residues tryptophan 54 to alanine 75 lie on the Cytoplasmic side of the membrane. A helical transmembrane segment spans residues glutamate 76 to isoleucine 96. The Vacuolar portion of the chain corresponds to glutamate 97–arginine 112. Residues leucine 113–histidine 133 form a helical membrane-spanning segment. Over aspartate 134–valine 235 the chain is Cytoplasmic. 3 consecutive short sequence motifs (histidine repeat) follow at residues histidine 141–histidine 145, histidine 163–histidine 167, and histidine 216–histidine 220. Disordered regions lie at residues histidine 141–leucine 170 and glutamine 208–histidine 227. Residues glutamate 149 to leucine 170 show a composition bias toward polar residues. Residues asparagine 212 to lysine 224 show a composition bias toward basic and acidic residues. A helical transmembrane segment spans residues phenylalanine 236–isoleucine 256. Residues tryptophan 257–tyrosine 265 are Vacuolar-facing. The helical transmembrane segment at tyrosine 266–leucine 286 threads the bilayer. Topologically, residues serine 287–leucine 442 are cytoplasmic. Residue lysine 357 forms a Glycyl lysine isopeptide (Lys-Gly) (interchain with G-Cter in ubiquitin) linkage. Phosphoserine is present on residues serine 387, serine 393, and serine 397. The disordered stretch occupies residues glycine 391 to tyrosine 419.

Belongs to the cation diffusion facilitator (CDF) transporter (TC 2.A.4) family. SLC30A subfamily.

It localises to the vacuole membrane. The enzyme catalyses Zn(2+)(in) = Zn(2+)(out). Its function is as follows. Vacuolar transporter that regulates zinc homeostasis by mediating zinc transport and storage into the vacuole. ZRC1 senses zinc availability in the cytosol, which might be performed through the histidine repeat motifs, and transports zinc from the cytosol to the vacuole if zinc in cytosol is abundant, conferring resistance to zinc toxicity. Plays a role in resistance to zinc shock resulting from sudden influx of zinc into cytoplasm when ZRT1 and ZRT2 are induced in response to zinc depletion. This Saccharomyces cerevisiae (strain ATCC 204508 / S288c) (Baker's yeast) protein is Vacuolar zinc transporter ZRC1.